The following is a 188-amino-acid chain: ATP-dependent Clp protease proteolytic subunit 1 (188 aa).

Serine 90 serves as the catalytic Nucleophile. Histidine 115 is an active-site residue.

Belongs to the peptidase S14 family. Fourteen ClpP subunits assemble into 2 heptameric rings which stack back to back to give a disk-like structure with a central cavity, resembling the structure of eukaryotic proteasomes.

The protein localises to the cytoplasm. The enzyme catalyses Hydrolysis of proteins to small peptides in the presence of ATP and magnesium. alpha-casein is the usual test substrate. In the absence of ATP, only oligopeptides shorter than five residues are hydrolyzed (such as succinyl-Leu-Tyr-|-NHMec, and Leu-Tyr-Leu-|-Tyr-Trp, in which cleavage of the -Tyr-|-Leu- and -Tyr-|-Trp bonds also occurs).. Its function is as follows. Cleaves peptides in various proteins in a process that requires ATP hydrolysis. Has a chymotrypsin-like activity. Plays a major role in the degradation of misfolded proteins. The chain is ATP-dependent Clp protease proteolytic subunit 1 from Corynebacterium jeikeium (strain K411).